The following is a 142-amino-acid chain: Large ribosomal subunit protein uL11 (142 aa).

Belongs to the universal ribosomal protein uL11 family. Part of the ribosomal stalk of the 50S ribosomal subunit. Interacts with L10 and the large rRNA to form the base of the stalk. L10 forms an elongated spine to which L12 dimers bind in a sequential fashion forming a multimeric L10(L12)X complex. One or more lysine residues are methylated.

Its function is as follows. Forms part of the ribosomal stalk which helps the ribosome interact with GTP-bound translation factors. In Gamma-proteobacterium EBAC31A08, this protein is Large ribosomal subunit protein uL11.